A 375-amino-acid chain; its full sequence is Cobalt-precorrin-5B C(1)-methyltransferase (375 aa).

It belongs to the CbiD family.

The enzyme catalyses Co-precorrin-5B + S-adenosyl-L-methionine = Co-precorrin-6A + S-adenosyl-L-homocysteine. Its pathway is cofactor biosynthesis; adenosylcobalamin biosynthesis; cob(II)yrinate a,c-diamide from sirohydrochlorin (anaerobic route): step 6/10. Its function is as follows. Catalyzes the methylation of C-1 in cobalt-precorrin-5B to form cobalt-precorrin-6A. In Paracidovorax citrulli (strain AAC00-1) (Acidovorax citrulli), this protein is Cobalt-precorrin-5B C(1)-methyltransferase.